Here is a 275-residue protein sequence, read N- to C-terminus: Diaminopimelate epimerase (275 aa).

Asn12, Gln45, and Asn65 together coordinate substrate. Catalysis depends on Cys74, which acts as the Proton donor. Substrate-binding positions include 75–76 (GN), Asn158, Asn191, and 209–210 (ER). Cys218 (proton acceptor) is an active-site residue. 219-220 (GT) is a substrate binding site.

This sequence belongs to the diaminopimelate epimerase family. In terms of assembly, homodimer.

It localises to the cytoplasm. The catalysed reaction is (2S,6S)-2,6-diaminopimelate = meso-2,6-diaminopimelate. It functions in the pathway amino-acid biosynthesis; L-lysine biosynthesis via DAP pathway; DL-2,6-diaminopimelate from LL-2,6-diaminopimelate: step 1/1. Functionally, catalyzes the stereoinversion of LL-2,6-diaminopimelate (L,L-DAP) to meso-diaminopimelate (meso-DAP), a precursor of L-lysine and an essential component of the bacterial peptidoglycan. The polypeptide is Diaminopimelate epimerase (Shewanella frigidimarina (strain NCIMB 400)).